Here is a 173-residue protein sequence, read N- to C-terminus: 2-C-methyl-D-erythritol 2,4-cyclodiphosphate synthase (173 aa).

A divalent metal cation-binding residues include aspartate 17 and histidine 19. Residues 17 to 19 (DVH) and 49 to 50 (HS) each bind 4-CDP-2-C-methyl-D-erythritol 2-phosphate. An a divalent metal cation-binding site is contributed by histidine 57. 4-CDP-2-C-methyl-D-erythritol 2-phosphate is bound by residues 76–80 (FPNTD), 147–150 (TTTE), and arginine 157.

This sequence belongs to the IspF family. In terms of assembly, homotrimer. A divalent metal cation is required as a cofactor.

The enzyme catalyses 4-CDP-2-C-methyl-D-erythritol 2-phosphate = 2-C-methyl-D-erythritol 2,4-cyclic diphosphate + CMP. The protein operates within isoprenoid biosynthesis; isopentenyl diphosphate biosynthesis via DXP pathway; isopentenyl diphosphate from 1-deoxy-D-xylulose 5-phosphate: step 4/6. In terms of biological role, involved in the biosynthesis of isopentenyl diphosphate (IPP) and dimethylallyl diphosphate (DMAPP), two major building blocks of isoprenoid compounds. Catalyzes the conversion of 4-diphosphocytidyl-2-C-methyl-D-erythritol 2-phosphate (CDP-ME2P) to 2-C-methyl-D-erythritol 2,4-cyclodiphosphate (ME-CPP) with a corresponding release of cytidine 5-monophosphate (CMP). This chain is 2-C-methyl-D-erythritol 2,4-cyclodiphosphate synthase, found in Ehrlichia ruminantium (strain Welgevonden).